The following is a 738-amino-acid chain: Dipeptidyl peptidase 3 (738 aa).

Ala2 bears the N-acetylalanine mark. Residue His450 coordinates Zn(2+). The active site involves Glu451. His455 and Glu508 together coordinate Zn(2+).

The protein belongs to the peptidase M49 family. Zn(2+) serves as cofactor.

It localises to the cytoplasm. The catalysed reaction is Release of an N-terminal dipeptide from a peptide comprising four or more residues, with broad specificity. Also acts on dipeptidyl 2-naphthylamides.. Inhibited by spinorphin, an opioid peptide derived from hemoglobin. Its function is as follows. Cleaves and degrades bioactive peptides, including angiotensin, Leu-enkephalin and Met-enkephalin. Also cleaves Arg-Arg-beta-naphthylamide. In Rattus norvegicus (Rat), this protein is Dipeptidyl peptidase 3 (Dpp3).